The following is an 82-amino-acid chain: Putative Fe(2+) transport protein A (82 aa).

Belongs to the FeoA family.

In terms of biological role, might be involved in Fe(2+) ion uptake. This Leptolyngbya boryana (Plectonema boryanum) protein is Putative Fe(2+) transport protein A.